The sequence spans 409 residues: Putative competence-damage inducible protein (409 aa).

It belongs to the CinA family.

The protein is Putative competence-damage inducible protein of Clostridium tetani (strain Massachusetts / E88).